A 1017-amino-acid chain; its full sequence is DNA replication licensing factor MCM6 (1017 aa).

Disordered regions lie at residues 1–94 (MSSP…SFKS) and 200–257 (SDSL…TSPE). Positions 24–34 (SIGAGFGSSSG) are enriched in low complexity. Positions 35–83 (LDSQIGSRLHFPSSSQPHVSNSQTGPFVNDSTQFSSQRLQTDGSATNDM) are enriched in polar residues. Ser-78 is subject to Phosphoserine. Residues 209 to 223 (DEGQADEDEQQDDDM) show a composition bias toward acidic residues. A compositionally biased stretch (polar residues) spans 224–257 (NGSSLPRDSGSSAAPGNGTSAMATRSITTSTSPE). Phosphoserine occurs at positions 249 and 372. An MCM domain is found at 525–732 (IYDKLVRSIA…IDTELASHIV (208 aa)). An ATP-binding site is contributed by 575–582 (GDPSTSKS). Positions 707–710 (SRFD) match the Arginine finger motif. The residue at position 766 (Thr-766) is a Phosphothreonine. The interval 852 to 901 (IESQSHAASGNNDDNDDGTGSGVITSEPPADIEEGQSEATARPGTSEKKK) is disordered.

It belongs to the MCM family. Component of the MCM2-7 complex. The complex forms a toroidal hexameric ring with the proposed subunit order MCM2-MCM6-MCM4-MCM7-MCM3-MCM5; loaded onto DNA, forms a head-head double hexamer. Interacts with MCM10.

Its subcellular location is the nucleus. The enzyme catalyses ATP + H2O = ADP + phosphate + H(+). Its function is as follows. Acts as a component of the MCM2-7 complex (MCM complex) which is the putative replicative helicase essential for 'once per cell cycle' DNA replication initiation and elongation in eukaryotic cells. The active ATPase sites in the MCM2-7 ring are formed through the interaction surfaces of two neighboring subunits such that a critical structure of a conserved arginine finger motif is provided in trans relative to the ATP-binding site of the Walker A box of the adjacent subunit. The six ATPase active sites, however, are likely to contribute differentially to the complex helicase activity. Once loaded onto DNA, double hexamers can slide on dsDNA in the absence of ATPase activity. Required for the entry in S phase and for cell division. This Saccharomyces cerevisiae (strain ATCC 204508 / S288c) (Baker's yeast) protein is DNA replication licensing factor MCM6 (MCM6).